The chain runs to 350 residues: Pro-cathepsin H (350 aa).

The signal sequence occupies residues 1–19 (MAQWTLLIVFFCVATAAAG). The propeptide at 20-113 (LSFHDSNPIR…WEEFRSHRLG (94 aa)) is activation peptide. Asn117 is a glycosylation site (N-linked (GlcNAc...) asparagine). Positions 122–132 (LKGNHRITDVV) are cleaved as a propeptide — removed in mature form. Disulfide bonds link Cys154–Cys197 and Cys188–Cys230. Residue Cys157 is part of the active site. The N-linked (GlcNAc...) asparagine glycan is linked to Asn177. N-linked (GlcNAc...) asparagine glycosylation is present at Asn246. Residues Cys288 and Cys338 are joined by a disulfide bond. Active-site residues include His297 and Asn317.

The protein belongs to the peptidase C1 family. Interacts with KPI104 and KPI106. Composed of a mini chain and a large chain. The large chain may be split into heavy and light chain. All chains are held together by disulfide bonds.

Its subcellular location is the vacuole. It localises to the lysosome. It carries out the reaction Hydrolysis of proteins, acting as an aminopeptidase (notably, cleaving Arg-|-Xaa bonds) as well as an endopeptidase.. Its function is as follows. May play a role in proteolysis leading to mobilization of nitrogen during senescence and starvation. The protein is Pro-cathepsin H of Medicago truncatula (Barrel medic).